A 364-amino-acid chain; its full sequence is MNIKQLGWNAHFESHFENYRGQDLVPARVIRVGGGFYTLLGADGEQTATLAGQLRHGSTQDALPAVGDWVGIDSPQEGGIRIHAILPRQTALKRATVSNRKGLVEKPGVPQVLAANVDIAIIVCGLNRDYNPRRIERYLTLVHESGAMPLIVLNKSDICPETQARRAEIESIAFGTPVLVTSAQCGDGLDELASHLKAGSTLVLIGSSGAGKSTLLNRLACAEHQQTSEISAAVGKGMHTTTHRELFPLPGGALVIDTPGLRELHLWGESEAGLASTFPEVIGFAAQCRFSDCQHDQEPDCGIRQALHDGTLDPARLESYLKQRAEIASATLQSELAAQVAQKRKRKTIPRQGKRWRREHGDGQ.

Positions 101-264 constitute a CP-type G domain; it reads KGLVEKPGVP…VIDTPGLREL (164 aa). GTP contacts are provided by residues 154–157 and 206–214; these read NKSD and GSSGAGKST. Zn(2+)-binding residues include Cys288, Cys293, His295, and Cys301. The interval 339–364 is disordered; the sequence is QVAQKRKRKTIPRQGKRWRREHGDGQ. Residues 342 to 358 are compositionally biased toward basic residues; sequence QKRKRKTIPRQGKRWRR.

The protein belongs to the TRAFAC class YlqF/YawG GTPase family. RsgA subfamily. As to quaternary structure, monomer. Associates with 30S ribosomal subunit, binds 16S rRNA. The cofactor is Zn(2+).

Its subcellular location is the cytoplasm. One of several proteins that assist in the late maturation steps of the functional core of the 30S ribosomal subunit. Helps release RbfA from mature subunits. May play a role in the assembly of ribosomal proteins into the subunit. Circularly permuted GTPase that catalyzes slow GTP hydrolysis, GTPase activity is stimulated by the 30S ribosomal subunit. This is Small ribosomal subunit biogenesis GTPase RsgA from Syntrophotalea carbinolica (strain DSM 2380 / NBRC 103641 / GraBd1) (Pelobacter carbinolicus).